The primary structure comprises 316 residues: Fe-S cluster assembly protein dre2 (316 aa).

The segment at 1–128 (MAPRCLLIGT…KPEQEEPVSI (128 aa)) is N-terminal SAM-like domain. The segment at 129 to 208 (PLKFGKNKAN…EDDLITEADM (80 aa)) is linker. Positions 141-177 (SATNGTNGAVNPDGSVPLNLNRKRDQPEPVKPAGVGF) are disordered. [2Fe-2S] cluster is bound by residues C218, C229, C232, and C234. The interval 218-234 (CQPKPGKRRRACKDCTC) is fe-S binding site A. [4Fe-4S] cluster is bound by residues C279, C282, C290, and C293. 2 consecutive short sequence motifs (cx2C motif) follow at residues 279–282 (CGNC) and 290–293 (CDGC). The tract at residues 279 to 293 (CGNCALGDAFRCDGC) is fe-S binding site B.

This sequence belongs to the anamorsin family. In terms of assembly, monomer. Interacts with TAH18. Interacts with MIA40. [2Fe-2S] cluster is required as a cofactor. Requires [4Fe-4S] cluster as cofactor.

Its subcellular location is the cytoplasm. It localises to the mitochondrion intermembrane space. Its function is as follows. Component of the cytosolic iron-sulfur (Fe-S) protein assembly (CIA) machinery required for the maturation of extramitochondrial Fe-S proteins. Part of an electron transfer chain functioning in an early step of cytosolic Fe-S biogenesis, facilitating the de novo assembly of a [4Fe-4S] cluster on the scaffold complex CFD1-NBP35. Electrons are transferred to DRE2 from NADPH via the FAD- and FMN-containing protein TAH18. TAH18-DRE2 are also required for the assembly of the diferric tyrosyl radical cofactor of ribonucleotide reductase (RNR), probably by providing electrons for reduction during radical cofactor maturation in the catalytic small subunit RNR2. This Pyrenophora tritici-repentis (strain Pt-1C-BFP) (Wheat tan spot fungus) protein is Fe-S cluster assembly protein dre2.